Consider the following 249-residue polypeptide: 3-deoxy-manno-octulosonate cytidylyltransferase (249 aa).

This sequence belongs to the KdsB family.

Its subcellular location is the cytoplasm. It catalyses the reaction 3-deoxy-alpha-D-manno-oct-2-ulosonate + CTP = CMP-3-deoxy-beta-D-manno-octulosonate + diphosphate. It participates in nucleotide-sugar biosynthesis; CMP-3-deoxy-D-manno-octulosonate biosynthesis; CMP-3-deoxy-D-manno-octulosonate from 3-deoxy-D-manno-octulosonate and CTP: step 1/1. It functions in the pathway bacterial outer membrane biogenesis; lipopolysaccharide biosynthesis. Its function is as follows. Activates KDO (a required 8-carbon sugar) for incorporation into bacterial lipopolysaccharide in Gram-negative bacteria. The sequence is that of 3-deoxy-manno-octulosonate cytidylyltransferase from Serratia proteamaculans (strain 568).